A 1197-amino-acid polypeptide reads, in one-letter code: DNA-directed RNA polymerase subunit beta (1197 aa).

A compositionally biased stretch (basic and acidic residues) spans 1172–1185 (KEQEEKKAQQEAEK). The segment at 1172–1197 (KEQEEKKAQQEAEKAQAASAEDPSAE) is disordered. Positions 1186 to 1197 (AQAASAEDPSAE) are enriched in low complexity.

It belongs to the RNA polymerase beta chain family. As to quaternary structure, the RNAP catalytic core consists of 2 alpha, 1 beta, 1 beta' and 1 omega subunit. When a sigma factor is associated with the core the holoenzyme is formed, which can initiate transcription.

It carries out the reaction RNA(n) + a ribonucleoside 5'-triphosphate = RNA(n+1) + diphosphate. In terms of biological role, DNA-dependent RNA polymerase catalyzes the transcription of DNA into RNA using the four ribonucleoside triphosphates as substrates. This is DNA-directed RNA polymerase subunit beta from Latilactobacillus sakei subsp. sakei (strain 23K) (Lactobacillus sakei subsp. sakei).